Here is a 315-residue protein sequence, read N- to C-terminus: Calumenin-A (315 aa).

Positions 1–19 (MEIRPLLMCFALCVVYATS) are cleaved as a signal peptide. EF-hand domains are found at residues 68–103 (ESKR…AQKK), 104–139 (YIYE…TYLD), 151–186 (HMMA…EEYD), 188–223 (MKDI…HEDE), 229–264 (WVAT…SDYD), and 265–300 (HAEA…FVGS). Residues D81, D83, D85, E92, D117, N119, D121, M123, and E128 each coordinate Ca(2+). N131 carries N-linked (GlcNAc...) asparagine glycosylation. D164, N166, D168, E175, D201, N203, D205, E212, D242, N244, D246, K248, E253, D278, N280, D282, K284, and E289 together coordinate Ca(2+). Residues 312-315 (HDEF) carry the Prevents secretion from ER motif.

It belongs to the CREC family. In terms of assembly, interacts with ggcx.

The protein localises to the endoplasmic reticulum membrane. The protein resides in the golgi apparatus. It is found in the secreted. It localises to the melanosome. Its subcellular location is the sarcoplasmic reticulum lumen. In terms of biological role, involved in regulation of vitamin K-dependent carboxylation of multiple N-terminal glutamate residues. Seems to inhibit gamma-carboxylase ggcx. Binds 7 calcium ions with a low affinity. The protein is Calumenin-A (calua) of Salmo salar (Atlantic salmon).